The chain runs to 606 residues: Adenine deaminase (606 aa).

The protein belongs to the metallo-dependent hydrolases superfamily. Adenine deaminase family. It depends on Mn(2+) as a cofactor.

It carries out the reaction adenine + H2O + H(+) = hypoxanthine + NH4(+). In Rubrobacter xylanophilus (strain DSM 9941 / JCM 11954 / NBRC 16129 / PRD-1), this protein is Adenine deaminase.